The chain runs to 218 residues: MIP18 family protein galla-1 (218 aa).

The disordered stretch occupies residues 1–59; it reads MLSYIKRKLSESDSGVSSVATVTSSCGGDSGRAGGTGSSESGTGSSSASISGRSQNADE. Over residues 12 to 27 the composition is skewed to low complexity; that stretch reads SDSGVSSVATVTSSCG. Serine 14 is modified (phosphoserine). Over residues 28 to 37 the composition is skewed to gly residues; it reads GDSGRAGGTG. The segment covering 38 to 54 has biased composition (low complexity); sequence SSESGTGSSSASISGRS. Serine 65 carries the phosphoserine modification.

The protein belongs to the MIP18 family. In terms of assembly, component of the CGX complex composed of crb, galla (galla-1 or galla-2) and Xpd. Interacts with crb (via intracellular domain). Is not able to interact with Xpd in the absence of crb.

It localises to the apical cell membrane. It is found in the cytoplasm. Its subcellular location is the cytoskeleton. The protein resides in the spindle. Component of the crb-galla-Xpd (CGX) complex which is essential for proper mitotic chromosome segregation in early embryos. The CGX complex is also required for cell proliferation in developing wing disks. In the CGX complex, acts with crb to recruit Xpd thus forming the functional complex. In Drosophila melanogaster (Fruit fly), this protein is MIP18 family protein galla-1.